We begin with the raw amino-acid sequence, 219 residues long: SCMKAAPMKEVSIRGQGSLAYPGLRTQGNLETLSGPNDATRGLTSLADTFEHVIEELLDEQQVIQPSKENKDADLYSSRVMLSSQVPLEPPLLFLLEEYKNYLDAANMSMRVRRHSDPARRGELSVCDSTSEWVTAAEKKTAVDMSGATVTVLEKVPVPKGQLKQYFYETKCSSKGYAKEGCRGIDKRYWNSQCRTTQSYVRALTMDNKKRVGWRFIRI.

The N-terminal stretch at 1-5 (SCMKA) is a signal peptide. The propeptide occupies 6 to 114 (APMKEVSIRG…AANMSMRVRR (109 aa)). Asparagine 107 is a glycosylation site (N-linked (GlcNAc...) asparagine). A disulfide bridge links cysteine 127 with cysteine 194.

Belongs to the NGF-beta family.

The protein localises to the secreted. Its function is as follows. Promotes the survival of neuronal populations that are all located either in the central nervous system or directly connected to it. The sequence is that of Neurotrophic factor BDNF precursor form (BDNF) from Loxocemus bicolor (Mexican burrowing python).